The sequence spans 403 residues: Phosphoglycerate kinase (403 aa).

Substrate is bound by residues 21 to 23 (DFN), R36, 59 to 62 (HLGR), R119, and R154. ATP is bound by residues K207, G299, E330, and 357 to 360 (GGDA).

This sequence belongs to the phosphoglycerate kinase family. As to quaternary structure, monomer.

The protein localises to the cytoplasm. It catalyses the reaction (2R)-3-phosphoglycerate + ATP = (2R)-3-phospho-glyceroyl phosphate + ADP. It functions in the pathway carbohydrate degradation; glycolysis; pyruvate from D-glyceraldehyde 3-phosphate: step 2/5. This Chlamydia felis (strain Fe/C-56) (Chlamydophila felis) protein is Phosphoglycerate kinase.